Consider the following 289-residue polypeptide: Four and a half LIM domains protein 3 (289 aa).

At serine 2 the chain carries N-acetylserine. Residues 7 to 31 (CAKCNESLYGRKYIQTDSGPYCVPC) form a C4-type zinc finger. 2 consecutive LIM zinc-binding domains span residues 40–92 (CAEC…CNEC) and 101–153 (CSAC…CVPC). Lysine 157 carries the post-translational modification N6-acetyllysine. LIM zinc-binding domains are found at residues 162–212 (CARC…CVAC) and 221–275 (CSSC…FVPD). An N6-acetyllysine modification is found at lysine 244.

As to quaternary structure, interacts with SOX15; the interaction recruits FHL3 to FOXK1 promoters where it acts as a transcriptional coactivator of FOXK1. Expressed in myogenic progenitor cells (at protein level). Expressed in skeletal striated muscle and the heart. Expressed to a lesser extent, in lung, and kidney. Expressed in skin and skeletal muscles such as the masseter, tongue, tibialis anterior and plantar muscles.

It localises to the nucleus. The protein localises to the cytoplasm. Its function is as follows. Recruited by SOX15 to FOXK1 promoters where it acts as a transcriptional coactivator of FOXK1. This chain is Four and a half LIM domains protein 3 (Fhl3), found in Mus musculus (Mouse).